A 752-amino-acid polypeptide reads, in one-letter code: MNQILKEKEQKTAKILVDRNPVPTSFEKWGVPGHFSRSLAKGPKTTTWIWNLHADVHDFDSHTSSLEDISRKIFSAHFGQLSLIFIWLSGMYFHGARFSNYTIWLSNPSLIKPSAQIVWPIVGQEILNADLGGGSQGIQITSGFFHLWRASGITNELELYVTALGGLFMAGLMAFGGWFHYHKAAPKLEWFQNVESMLNHHLAGLLGLGSLSWAGHQIHVSLPINKLLDAGVDPKTIPLPHEFILNRELMSQLYPSFEKGLWPFFSLNWGAYSDFLTFRGGLNPITGSLWMSDIAHHHLAISVLFIVAGHMYRTNWGIGHSIKEILDAHRGPLTGSGHRGLYEALTTSWHANLAINLALFGSLSIIVAHHMYAMPPYPYISIDYPTQLSLFTHHTWIGGFCIVGASAHGAIFMIRDYVPSQHYNNVLDRLIRHRDALISHLNWVCIFLGTHSFGLYIHNDTMRALGRSQDMFSDTAIQLQPIFAQWIQSLHTLAPANTAPNALATTSYVFGGEVVAVANKIAMMPMKLGTADFMVHHIHAFTIHVTLLILLKGVLFARNSRLIPDKANLGFRFPCDGPGRGGTCQVSSWDHVFLGLFWMYNCISVVIFHFSWKMQSDVWGTVSQNSLVSHVVGGNFSQSAITINGWLRDFLWAQASQVIQSYGSSISAYGLMFLAAHFIWAFSLMFLFSGRGYWQELIESIVWAHSKLKIAPTIQPRALSITQGRAVGAAHYLLGGIATTWAFFLSRAISIG.

8 helical membrane passes run 73-96 (IFSA…FHGA), 159-182 (LYVT…FHYH), 198-222 (LNHH…HVSL), 294-312 (IAHH…GHMY), 349-372 (WHAN…HHMY), 388-414 (LSLF…IFMI), 436-458 (ALIS…LYIH), and 533-551 (FMVH…LILL). 2 residues coordinate [4Fe-4S] cluster: Cys575 and Cys584. The next 2 helical transmembrane spans lie at 591 to 612 (HVFL…HFSW) and 666 to 688 (ISAY…MFLF). His677 lines the chlorophyll a' pocket. Chlorophyll a-binding residues include Met685 and Tyr693. Trp694 contributes to the phylloquinone binding site. A helical transmembrane segment spans residues 726 to 746 (AVGAAHYLLGGIATTWAFFLS).

Belongs to the PsaA/PsaB family. As to quaternary structure, the PsaA/B heterodimer binds the P700 chlorophyll special pair and subsequent electron acceptors. PSI consists of a core antenna complex that captures photons, and an electron transfer chain that converts photonic excitation into a charge separation. The eukaryotic PSI reaction center is composed of at least 11 subunits. The cofactor is P700 is a chlorophyll a/chlorophyll a' dimer, A0 is one or more chlorophyll a, A1 is one or both phylloquinones and FX is a shared 4Fe-4S iron-sulfur center..

The protein localises to the plastid. The protein resides in the chloroplast thylakoid membrane. The enzyme catalyses reduced [plastocyanin] + hnu + oxidized [2Fe-2S]-[ferredoxin] = oxidized [plastocyanin] + reduced [2Fe-2S]-[ferredoxin]. Functionally, psaA and PsaB bind P700, the primary electron donor of photosystem I (PSI), as well as the electron acceptors A0, A1 and FX. PSI is a plastocyanin/cytochrome c6-ferredoxin oxidoreductase, converting photonic excitation into a charge separation, which transfers an electron from the donor P700 chlorophyll pair to the spectroscopically characterized acceptors A0, A1, FX, FA and FB in turn. Oxidized P700 is reduced on the lumenal side of the thylakoid membrane by plastocyanin or cytochrome c6. This Cyanidium caldarium (Red alga) protein is Photosystem I P700 chlorophyll a apoprotein A1.